A 408-amino-acid chain; its full sequence is Arginine biosynthesis bifunctional protein ArgJ (408 aa).

Residues threonine 156, lysine 182, threonine 193, glutamate 279, asparagine 403, and threonine 408 each contribute to the substrate site. The active-site Nucleophile is the threonine 193.

This sequence belongs to the ArgJ family. As to quaternary structure, heterotetramer of two alpha and two beta chains.

Its subcellular location is the cytoplasm. It catalyses the reaction N(2)-acetyl-L-ornithine + L-glutamate = N-acetyl-L-glutamate + L-ornithine. It carries out the reaction L-glutamate + acetyl-CoA = N-acetyl-L-glutamate + CoA + H(+). It functions in the pathway amino-acid biosynthesis; L-arginine biosynthesis; L-ornithine and N-acetyl-L-glutamate from L-glutamate and N(2)-acetyl-L-ornithine (cyclic): step 1/1. The protein operates within amino-acid biosynthesis; L-arginine biosynthesis; N(2)-acetyl-L-ornithine from L-glutamate: step 1/4. Functionally, catalyzes two activities which are involved in the cyclic version of arginine biosynthesis: the synthesis of N-acetylglutamate from glutamate and acetyl-CoA as the acetyl donor, and of ornithine by transacetylation between N(2)-acetylornithine and glutamate. This is Arginine biosynthesis bifunctional protein ArgJ from Methylococcus capsulatus (strain ATCC 33009 / NCIMB 11132 / Bath).